A 709-amino-acid polypeptide reads, in one-letter code: MSKQVFEMIFAGKKLVVETGQVAKQANGSVVVRYGDSTVLTAAVMSKKMSTGDFFPLQVNYEEKMYAAGKFPGGFNKREGRPSTDATLTARLIDRPIRPMFAEGFRNEVQVINTVLSFDENASAPMAAMFGSSLALSISDIPFNGPIAGVQVAYVDGNFIINPTAQEQEASALELTVAGTKEAINMVESGAKELSEEIMLEALLKGHEAVCELIAFQEEIVTAIGKEKAEVELLQVDPELQAEIIATHNIALQAAVQVEEKKAREAATEAVKEVVIGEYEARYAEHEEYDRIMRDVAEILEQMEHAEVRRLITEDKIRPDGRRVDEIRPLDAEIDFLPQVHGSGLFTRGQTQALSVLTLAPMGEAQIIDGLTPEYKKRFMHHYNFPQYSVGETGRYGAAGRREIGHGALGERALEQVLPRLEEFPYAIRLVAEVLESNGSSSQASICAGTLALMAGGVPIKAPVAGIAMGLISDGTNYTVLTDIQGLEDHFGDMDFKVAGTREGITALQMDIKIEGITPQILEEALAQAKKARFEILDVLHGAIAEPRPQLAPTAPKIDMIKIDVDKIKVVIGKGGETIDKIIAETGVKIDIDEEGNVSIFSSDQAAIDRTKDIIASLVREAKVGEVYHAKVVRIEKFGAFVNLFDKTDALVHISEIAWTRTANVADVLEIGEEVDVKVIKIDDKGRVDASMKALLPRPPKADNPKKES.

Mg(2+) is bound by residues aspartate 489 and aspartate 495. Positions 556-615 (PKIDMIKIDVDKIKVVIGKGGETIDKIIAETGVKIDIDEEGNVSIFSSDQAAIDRTKDII) constitute a KH domain. An S1 motif domain is found at 625-693 (GEVYHAKVVR…DKGRVDASMK (69 aa)).

It belongs to the polyribonucleotide nucleotidyltransferase family. Mg(2+) serves as cofactor.

The protein resides in the cytoplasm. It catalyses the reaction RNA(n+1) + phosphate = RNA(n) + a ribonucleoside 5'-diphosphate. Functionally, involved in mRNA degradation. Catalyzes the phosphorolysis of single-stranded polyribonucleotides processively in the 3'- to 5'-direction. The chain is Polyribonucleotide nucleotidyltransferase from Streptococcus agalactiae serotype V (strain ATCC BAA-611 / 2603 V/R).